The chain runs to 217 residues: Small ribosomal subunit protein uS2 (217 aa).

This sequence belongs to the universal ribosomal protein uS2 family.

The sequence is that of Small ribosomal subunit protein uS2 from Korarchaeum cryptofilum (strain OPF8).